A 262-amino-acid chain; its full sequence is Acyl-[acyl-carrier-protein]--UDP-N-acetylglucosamine O-acyltransferase (262 aa).

It belongs to the transferase hexapeptide repeat family. LpxA subfamily. Homotrimer.

The protein resides in the cytoplasm. The enzyme catalyses a (3R)-hydroxyacyl-[ACP] + UDP-N-acetyl-alpha-D-glucosamine = a UDP-3-O-[(3R)-3-hydroxyacyl]-N-acetyl-alpha-D-glucosamine + holo-[ACP]. It functions in the pathway glycolipid biosynthesis; lipid IV(A) biosynthesis; lipid IV(A) from (3R)-3-hydroxytetradecanoyl-[acyl-carrier-protein] and UDP-N-acetyl-alpha-D-glucosamine: step 1/6. Functionally, involved in the biosynthesis of lipid A, a phosphorylated glycolipid that anchors the lipopolysaccharide to the outer membrane of the cell. The polypeptide is Acyl-[acyl-carrier-protein]--UDP-N-acetylglucosamine O-acyltransferase (Yersinia enterocolitica serotype O:8 / biotype 1B (strain NCTC 13174 / 8081)).